An 887-amino-acid polypeptide reads, in one-letter code: Semaphorin-6B (887 aa).

Positions 1–26 (MWTPRAPPPRPALLFLLLLLLRVTHG) are cleaved as a signal peptide. Over 27–605 (LFPDEPPPLS…VSVNLLVTSS (579 aa)) the chain is Extracellular. Positions 32–525 (PPPLSVAPRD…FPRCVVRVPV (494 aa)) constitute a Sema domain. N-linked (GlcNAc...) asparagine glycosylation occurs at Asn-75. Cystine bridges form between Cys-117/Cys-127 and Cys-145/Cys-154. N-linked (GlcNAc...) asparagine glycans are attached at residues Asn-156, Asn-168, and Asn-292. Disulfide bonds link Cys-268/Cys-379 and Cys-293/Cys-338. N-linked (GlcNAc...) asparagine glycosylation is found at Asn-387, Asn-442, and Asn-463. 4 disulfides stabilise this stretch: Cys-487-Cys-519, Cys-528-Cys-546, Cys-534-Cys-580, and Cys-538-Cys-554. The helical transmembrane segment at 606-626 (VAAFVVGAVVSGFSVGWFVGL) threads the bilayer. The Cytoplasmic portion of the chain corresponds to 627-887 (RERRELARRK…TGERTAPPVP (261 aa)). Disordered regions lie at residues 656 to 675 (LGER…GGPG), 697 to 717 (HGGP…TPLP), and 759 to 887 (APEQ…PPVP). A compositionally biased stretch (gly residues) spans 662–674 (TGTGGRGGAGGGP). An Omega-N-methylarginine modification is found at Arg-667. Residues 707 to 717 (LLPTPEQTPLP) show a composition bias toward low complexity.

This sequence belongs to the semaphorin family.

It localises to the cell membrane. Functionally, functions as a cell surface repellent for mossy fibers of developing neurons in the hippocampus where it plays a role in axon guidance. May function through the PLXNA4 receptor expressed by mossy cell axons. In Rattus norvegicus (Rat), this protein is Semaphorin-6B (Sema6b).